A 342-amino-acid chain; its full sequence is Isopentenyl-diphosphate delta-isomerase (342 aa).

11–12 (RK) serves as a coordination point for substrate. FMN is bound by residues Ser68, 69-71 (SMT), Ser99, and Asn127. 99–101 (SMR) contributes to the substrate binding site. Gln162 contacts substrate. Glu163 contributes to the Mg(2+) binding site. Residues Lys194, Thr224, 274-276 (GLK), and 295-296 (AG) each bind FMN.

Belongs to the IPP isomerase type 2 family. Homooctamer. Dimer of tetramers. FMN is required as a cofactor. It depends on NADPH as a cofactor. Requires Mg(2+) as cofactor.

The protein localises to the cytoplasm. It catalyses the reaction isopentenyl diphosphate = dimethylallyl diphosphate. Its function is as follows. Involved in the biosynthesis of isoprenoids. Catalyzes the 1,3-allylic rearrangement of the homoallylic substrate isopentenyl (IPP) to its allylic isomer, dimethylallyl diphosphate (DMAPP). The protein is Isopentenyl-diphosphate delta-isomerase of Rickettsia rickettsii (strain Iowa).